The chain runs to 78 residues: Translational regulator CsrA (78 aa).

The protein belongs to the CsrA/RsmA family. Homodimer; the beta-strands of each monomer intercalate to form a hydrophobic core, while the alpha-helices form wings that extend away from the core.

It is found in the cytoplasm. A translational regulator that binds mRNA to regulate translation initiation and/or mRNA stability. Usually binds in the 5'-UTR at or near the Shine-Dalgarno sequence preventing ribosome-binding, thus repressing translation. Its main target seems to be the major flagellin gene, while its function is anatagonized by FliW. This is Translational regulator CsrA from Caldicellulosiruptor bescii (strain ATCC BAA-1888 / DSM 6725 / KCTC 15123 / Z-1320) (Anaerocellum thermophilum).